The primary structure comprises 247 residues: MSPNPTSEFKQIIEQQSEKILNPIERTKVTQDLSENVILTTVDDLYNWARLSSLWPMLYGTACCFIEFAALIGSRFDFDRFGLVPRSSPRQADLIITAGTITMKMAPALVRLYEEMPEPKYVIAMGACTITGGMFSSDSTTAVRGVDKLIPVDVYIPGCPPRPEAIIDAIIKLRKKVANESIQERGTVLQQTNRYYSTTHKMQATEPILTGKYLQSATRQAPPKELLEATGMPVPPALLTTKQKEEI.

C63, C64, C128, and C159 together coordinate [4Fe-4S] cluster.

Belongs to the complex I 20 kDa subunit family. NDH-1 can be composed of about 15 different subunits; different subcomplexes with different compositions have been identified which probably have different functions. [4Fe-4S] cluster serves as cofactor.

It localises to the cellular thylakoid membrane. It carries out the reaction a plastoquinone + NADH + (n+1) H(+)(in) = a plastoquinol + NAD(+) + n H(+)(out). The enzyme catalyses a plastoquinone + NADPH + (n+1) H(+)(in) = a plastoquinol + NADP(+) + n H(+)(out). Functionally, NDH-1 shuttles electrons from an unknown electron donor, via FMN and iron-sulfur (Fe-S) centers, to quinones in the respiratory and/or the photosynthetic chain. The immediate electron acceptor for the enzyme in this species is believed to be plastoquinone. Couples the redox reaction to proton translocation, and thus conserves the redox energy in a proton gradient. Cyanobacterial NDH-1 also plays a role in inorganic carbon-concentration. The polypeptide is NAD(P)H-quinone oxidoreductase subunit K (Microcystis aeruginosa (strain NIES-843 / IAM M-2473)).